Reading from the N-terminus, the 350-residue chain is UDP-N-acetylenolpyruvoylglucosamine reductase (350 aa).

The FAD-binding PCMH-type domain occupies 24 to 195 (HVDATARWLL…VAVEFNLPLL (172 aa)). Residue Arg-172 is part of the active site. Residue Ser-245 is the Proton donor of the active site. The active site involves Glu-342.

This sequence belongs to the MurB family. The cofactor is FAD.

The protein resides in the cytoplasm. The catalysed reaction is UDP-N-acetyl-alpha-D-muramate + NADP(+) = UDP-N-acetyl-3-O-(1-carboxyvinyl)-alpha-D-glucosamine + NADPH + H(+). It functions in the pathway cell wall biogenesis; peptidoglycan biosynthesis. Cell wall formation. The sequence is that of UDP-N-acetylenolpyruvoylglucosamine reductase from Xanthomonas campestris pv. campestris (strain B100).